The sequence spans 267 residues: Cell division protein FtsQ (267 aa).

Residues 1 to 32 (MRKKTSSNKKKQTKKTNNISLRRKLGLMYKKA) are Cytoplasmic-facing. A helical membrane pass occupies residues 33-53 (ILGLKIALIIFVCLFVFTKYF). At 54–267 (AGIKTYLTTN…DKNKYYIEKY (214 aa)) the chain is on the periplasmic side. Positions 73–141 (FKLENVIIEG…NTVYIKLFER (69 aa)) constitute a POTRA domain.

It belongs to the FtsQ/DivIB family. FtsQ subfamily.

The protein resides in the cell inner membrane. Essential cell division protein. The sequence is that of Cell division protein FtsQ from Rickettsia conorii (strain ATCC VR-613 / Malish 7).